Consider the following 289-residue polypeptide: uncharacterized protein (289 aa).

A signal peptide spans 1–19 (MAKWLGAPLARGVSTATRA). A run of 2 helical transmembrane segments spans residues 90-110 (GLLAAAFVASVLLGVGIGWGV) and 257-277 (AALSLSLYVSSDYGGGYLVFA).

Its subcellular location is the cell membrane. This is an uncharacterized protein from Mycobacterium tuberculosis (strain CDC 1551 / Oshkosh).